Reading from the N-terminus, the 533-residue chain is Probable DNA ligase (533 aa).

Glutamate 211 is an ATP binding site. The active-site N6-AMP-lysine intermediate is lysine 213. Residues arginine 218, arginine 233, glutamate 262, phenylalanine 302, arginine 374, and lysine 380 each coordinate ATP. Residues 512–533 are disordered; it reads LAGEAAEKGQAEGGGEELEDDG.

It belongs to the ATP-dependent DNA ligase family. Mg(2+) serves as cofactor.

It catalyses the reaction ATP + (deoxyribonucleotide)n-3'-hydroxyl + 5'-phospho-(deoxyribonucleotide)m = (deoxyribonucleotide)n+m + AMP + diphosphate.. Functionally, DNA ligase that seals nicks in double-stranded DNA during DNA replication, DNA recombination and DNA repair. In Sorangium cellulosum (strain So ce56) (Polyangium cellulosum (strain So ce56)), this protein is Probable DNA ligase.